The sequence spans 335 residues: Nucleoid-associated protein Pput_1012 (335 aa).

It belongs to the YejK family.

The protein localises to the cytoplasm. It localises to the nucleoid. The chain is Nucleoid-associated protein Pput_1012 from Pseudomonas putida (strain ATCC 700007 / DSM 6899 / JCM 31910 / BCRC 17059 / LMG 24140 / F1).